The primary structure comprises 881 residues: Alanine--tRNA ligase (881 aa).

4 residues coordinate Zn(2+): histidine 564, histidine 568, cysteine 673, and histidine 677. The disordered stretch occupies residues 848–867; sequence GQGGGGRPDMAQAGGPDGDK.

Belongs to the class-II aminoacyl-tRNA synthetase family. The cofactor is Zn(2+).

The protein localises to the cytoplasm. The enzyme catalyses tRNA(Ala) + L-alanine + ATP = L-alanyl-tRNA(Ala) + AMP + diphosphate. Catalyzes the attachment of alanine to tRNA(Ala) in a two-step reaction: alanine is first activated by ATP to form Ala-AMP and then transferred to the acceptor end of tRNA(Ala). Also edits incorrectly charged Ser-tRNA(Ala) and Gly-tRNA(Ala) via its editing domain. The polypeptide is Alanine--tRNA ligase (Hyphomonas neptunium (strain ATCC 15444)).